The following is a 455-amino-acid chain: Golgi pH regulator (455 aa).

2 helical membrane passes run 5 to 25 (ADSV…WLFF) and 46 to 66 (VTFA…LGLL). An N-linked (GlcNAc...) asparagine glycan is attached at Asn-67. Transmembrane regions (helical) follow at residues 79 to 99 (LCVI…YFVV), 111 to 131 (LFSC…GDPF), and 150 to 170 (VGVI…VNCP). The N-linked (GlcNAc...) asparagine glycan is linked to Asn-180. The next 4 membrane-spanning stretches (helical) occupy residues 290–310 (GYFF…NIVF), 343–363 (ISFI…LITL), 378–398 (VIVL…VLLI), and 425–445 (WFDV…YLAH).

This sequence belongs to the Golgi pH regulator (TC 1.A.38) family. Homotrimer.

Its subcellular location is the golgi apparatus membrane. It carries out the reaction iodide(out) = iodide(in). The enzyme catalyses chloride(in) = chloride(out). It catalyses the reaction bromide(in) = bromide(out). The catalysed reaction is fluoride(in) = fluoride(out). Voltage-gated channel that enables the transfer of anions such as iodide, chloride, bromide and fluoride which may function in counter-ion conductance and participates in Golgi acidification. This Xenopus laevis (African clawed frog) protein is Golgi pH regulator (gpr89-b).